A 76-amino-acid polypeptide reads, in one-letter code: Transcription attenuation protein MtrB (76 aa).

Belongs to the MtrB family. Oligomer of 11 identical subunits arranged in doughnut-like structure.

Required for transcription attenuation control in the Trp operon. This trans-acting factor seems to recognize a 10 bases nucleotide sequence in the Trp leader transcript causing transcription termination. Binds the leader RNA only in presence of L-tryptophan. The chain is Transcription attenuation protein MtrB (mtrB) from Bacillus pumilus (Bacillus mesentericus).